The chain runs to 664 residues: DNA primase (664 aa).

The CHC2-type zinc-finger motif lies at 40-64 (CPFHKEKTPSFTVSPDKQFYYCFGC). The segment covering 94-104 (GMDVPREERGG) has biased composition (basic and acidic residues). Residues 94–115 (GMDVPREERGGRGHTPRQPTDS) form a disordered region. Positions 262 to 344 (DEIMVVEGYM…GKRVRFLFLP (83 aa)) constitute a Toprim domain. Mg(2+) is bound by residues Glu268, Asp312, and Asp314. The tract at residues 483–521 (PRKSWNKDKKPWDGKKWDGKKKWDKGGRGDFKAPQRTPV) is disordered. The span at 487–515 (WNKDKKPWDGKKWDGKKKWDKGGRGDFKA) shows a compositional bias: basic and acidic residues.

Belongs to the DnaG primase family. Monomer. Interacts with DnaB. Zn(2+) is required as a cofactor. The cofactor is Mg(2+).

The catalysed reaction is ssDNA + n NTP = ssDNA/pppN(pN)n-1 hybrid + (n-1) diphosphate.. Functionally, RNA polymerase that catalyzes the synthesis of short RNA molecules used as primers for DNA polymerase during DNA replication. The protein is DNA primase of Pseudomonas aeruginosa (strain ATCC 15692 / DSM 22644 / CIP 104116 / JCM 14847 / LMG 12228 / 1C / PRS 101 / PAO1).